The sequence spans 1045 residues: Extracellular serine protease (1045 aa).

A signal peptide spans 1–27 (MILNKRLKLAYCVFLGCYGLSIHSSLA). Positions 49-397 (QWGLEAISAE…WGRVNLRDAI (349 aa)) constitute a Peptidase S8 domain. Active-site charge relay system residues include aspartate 76, histidine 112, and serine 341. Positions 646–1045 (SLASTENEKA…SVNAGLTWRF (400 aa)) are cleaved as a propeptide — translocator domain; removed in mature form. The Autotransporter domain maps to 769–1045 (IKADDNGAWA…SVNAGLTWRF (277 aa)).

This sequence belongs to the peptidase S8 family.

Its subcellular location is the secreted. This chain is Extracellular serine protease, found in Serratia marcescens.